The primary structure comprises 311 residues: Porphobilinogen deaminase (311 aa).

C242 is modified (S-(dipyrrolylmethanemethyl)cysteine).

This sequence belongs to the HMBS family. Monomer. Dipyrromethane serves as cofactor.

It carries out the reaction 4 porphobilinogen + H2O = hydroxymethylbilane + 4 NH4(+). The protein operates within porphyrin-containing compound metabolism; protoporphyrin-IX biosynthesis; coproporphyrinogen-III from 5-aminolevulinate: step 2/4. Tetrapolymerization of the monopyrrole PBG into the hydroxymethylbilane pre-uroporphyrinogen in several discrete steps. This chain is Porphobilinogen deaminase (hemC), found in Vibrio cholerae serotype O1 (strain ATCC 39315 / El Tor Inaba N16961).